Here is a 31-residue protein sequence, read N- to C-terminus: Unknown protein from spot 104 of 2D-PAGE of thylakoid (31 aa).

The protein localises to the plastid. Its subcellular location is the chloroplast thylakoid. The polypeptide is Unknown protein from spot 104 of 2D-PAGE of thylakoid (Pisum sativum (Garden pea)).